The following is a 144-amino-acid chain: MTTPSMEDYIEQIYMLIEEKGYARVSDIAEALAVHPSSVTKMVQKLDKDEYLIYEKYRGLILTPKGKKIGKRLVYRHELLEQFLRIIGVDEEKIYDDVEGIEHHLSWNSIDRIGDLVQFFEESDERSVQLKAIQKKNEQTNQES.

Residues 1–63 (MTTPSMEDYI…YEKYRGLILT (63 aa)) enclose the HTH dtxR-type domain. The Mn(2+) site is built by aspartate 8, glutamate 11, histidine 77, glutamate 99, glutamate 102, and histidine 103.

This sequence belongs to the DtxR/MntR family. In terms of assembly, homodimer.

The protein localises to the cytoplasm. Its activity is regulated as follows. DNA binding is strongly activated by Mn(2+). Its function is as follows. Central regulator of manganese homeostasis. The polypeptide is HTH-type transcriptional regulator MntR (Bacillus pumilus (strain SAFR-032)).